The primary structure comprises 132 residues: MSTTFAARLNRLFDTVYPPGRGPHTSAEVIAALKAEGITMSAPYLSQLRSGNRTNPSGATMAALANFFRIKAAYFTDDEYYEKLDKELQWLCTMRDDGVRRIAQRAHGLPSAAQQKVLDRIDELRRAEGIDA.

The H-T-H motif DNA-binding region spans 38 to 50; the sequence is ITMSAPYLSQLRS.

Homodimer. Binds DNA as a dimer of dimers.

Its subcellular location is the cytoplasm. The protein localises to the nucleoid. Virulence regulator that has both architectural and regulatory roles. Impacts cell wall functions and pathogenesis through regulation of multiple genes. The polypeptide is Nucleoid-associated protein EspR (Mycobacterium tuberculosis (strain CDC 1551 / Oshkosh)).